We begin with the raw amino-acid sequence, 425 residues long: MLVTNKVEKLEGKMTVPGDKSISHRAIMLSSISKGTSRVKGFLRGEDCLSTISCFRDLGIDIEDRGTEIIIQGKGLHGLSEPLNVLDAGNSGTTIRLISGILAGQKFLTIVTGDASLRKRPMERIATPLRKMGAFIEGRDYGNLAPLVIRGGNLKGMDYASPVSSAQVKSAILLAGLYGEGDTIVREKITSRDHTEKMLKGLGANISTDQGVTRLGKSELYGQSIEVPGDISSAAFFMAGAAALPGSFLITEGVGLNPTRTGIIDVLRDMGGDIEIHNLRQSGGEEIGDIMIRGKKLYGTEIGKEIIPRLIDEIPVLAIIAATAEGKTIITGAEELKVKESNRITAMVTEMQKVGIKVTELPDGMEIEGGQVITGGRVESYGDHRIAMAMAICGLFAQEPIKINDSQCIDISFPNFEEKLKAVVR.

Lys20, Ser21, and Arg25 together coordinate 3-phosphoshikimate. Phosphoenolpyruvate is bound at residue Lys20. Residues Gly92 and Arg120 each coordinate phosphoenolpyruvate. Positions 165, 167, 312, and 339 each coordinate 3-phosphoshikimate. Gln167 contributes to the phosphoenolpyruvate binding site. Asp312 functions as the Proton acceptor in the catalytic mechanism. Positions 343 and 385 each coordinate phosphoenolpyruvate.

It belongs to the EPSP synthase family. Monomer.

It is found in the cytoplasm. It catalyses the reaction 3-phosphoshikimate + phosphoenolpyruvate = 5-O-(1-carboxyvinyl)-3-phosphoshikimate + phosphate. The protein operates within metabolic intermediate biosynthesis; chorismate biosynthesis; chorismate from D-erythrose 4-phosphate and phosphoenolpyruvate: step 6/7. Its function is as follows. Catalyzes the transfer of the enolpyruvyl moiety of phosphoenolpyruvate (PEP) to the 5-hydroxyl of shikimate-3-phosphate (S3P) to produce enolpyruvyl shikimate-3-phosphate and inorganic phosphate. The chain is 3-phosphoshikimate 1-carboxyvinyltransferase from Alkaliphilus metalliredigens (strain QYMF).